The sequence spans 293 residues: ATP synthase gamma chain (293 aa).

The protein belongs to the ATPase gamma chain family. In terms of assembly, F-type ATPases have 2 components, CF(1) - the catalytic core - and CF(0) - the membrane proton channel. CF(1) has five subunits: alpha(3), beta(3), gamma(1), delta(1), epsilon(1). CF(0) has three main subunits: a, b and c.

It localises to the cell inner membrane. Produces ATP from ADP in the presence of a proton gradient across the membrane. The gamma chain is believed to be important in regulating ATPase activity and the flow of protons through the CF(0) complex. This chain is ATP synthase gamma chain, found in Psychrobacter arcticus (strain DSM 17307 / VKM B-2377 / 273-4).